A 534-amino-acid chain; its full sequence is Glucans biosynthesis protein D (534 aa).

The segment at residues 1 to 30 (MRMQRRHLLKNAAAALAALGLPALPQWALA) is a signal peptide (tat-type signal).

Belongs to the OpgD/OpgG family. Post-translationally, predicted to be exported by the Tat system. The position of the signal peptide cleavage has not been experimentally proven.

The protein localises to the periplasm. It functions in the pathway glycan metabolism; osmoregulated periplasmic glucan (OPG) biosynthesis. Probably involved in the control of the structural glucose backbone of osmoregulated periplasmic glucans (OPGs). The protein is Glucans biosynthesis protein D of Xanthomonas oryzae pv. oryzae (strain KACC10331 / KXO85).